The sequence spans 318 residues: Deoxyribose-phosphate aldolase (318 aa).

Asp-155 serves as the catalytic Proton donor/acceptor. Lys-218 functions as the Schiff-base intermediate with acetaldehyde in the catalytic mechanism. The active-site Proton donor/acceptor is the Lys-254.

Belongs to the DeoC/FbaB aldolase family. DeoC type 2 subfamily. Interacts with YBX1.

The protein localises to the cytoplasm. The protein resides in the cytoplasmic granule. It localises to the nucleus. The catalysed reaction is 2-deoxy-D-ribose 5-phosphate = D-glyceraldehyde 3-phosphate + acetaldehyde. The protein operates within carbohydrate degradation; 2-deoxy-D-ribose 1-phosphate degradation; D-glyceraldehyde 3-phosphate and acetaldehyde from 2-deoxy-alpha-D-ribose 1-phosphate: step 2/2. Catalyzes a reversible aldol reaction between acetaldehyde and D-glyceraldehyde 3-phosphate to generate 2-deoxy-D-ribose 5-phosphate. Participates in stress granule (SG) assembly. May allow ATP production from extracellular deoxyinosine in conditions of energy deprivation. This Mus musculus (Mouse) protein is Deoxyribose-phosphate aldolase (Dera).